Here is a 113-residue protein sequence, read N- to C-terminus: Death-associated protein-like 1.L (113 aa).

A disordered region spans residues 1 to 57; the sequence is MAKEQKMQSSPQALKAGHLPAVKAGGMRVSKKQGNEENSAPEKNAKKTLQEKPSSVL.

The protein belongs to the DAP-DAPL1 family. As to quaternary structure, associates with ribosomes; preventing translation. Interacts with eiF5a (eif5a and eif5a2); preventing translation.

Functionally, ribosome-binding protein that promotes ribosome hibernation, a process during which ribosomes are stabilized in an inactive state and preserved from proteasomal degradation. Acts via its association with eiF5a (eif5a and eif5a2) at the polypeptide exit tunnel of the ribosome, preventing mRNA translation. Plays a key role in ribosome hibernation in the mature egg by preventing mRNA translation, leading to ribosome inactivation. Ribosomes, which are produced in large quantities during oogenesis, are stored and translationally repressed in the egg and early embryo. In Xenopus laevis (African clawed frog), this protein is Death-associated protein-like 1.L (dapl1.L).